Here is a 476-residue protein sequence, read N- to C-terminus: WD repeat, SAM and U-box domain-containing protein 1 (476 aa).

7 WD repeats span residues 10 to 47 (DHGDDVNCCAFSFSLLATCSLDKTIRLYSLRDFTELPH), 52 to 91 (FHTYAVHCCCFSPSGHILASCSTDGTTVLWNTENGQMLAV), 95 to 134 (PSGSPVRVCQFSPDSTCLASGAADGTVVLWNAQSYKLYRC), 137 to 176 (VKDGSLAACAFSPNGSFFVTGSSCGDLTVWDDKMRCLHSE), 178 to 228 (AHDL…LGFE), 237 to 276 (GHCAPVLACAFSHDGQMLVSGSVDKSVIVYDTNTENILHT), and 279 to 318 (QHTRYVTTCAFAPNTLLLATGSMDKTVNIWQFDLETLCQA). The SAM domain maps to 332-396 (WSEEDVSTWL…LRKIEELRTK (65 aa)). Positions 403–476 (GIPDEFICPI…INRWLETHQK (74 aa)) constitute a U-box domain. Threonine 458 is modified (phosphothreonine).

The chain is WD repeat, SAM and U-box domain-containing protein 1 (WDSUB1) from Homo sapiens (Human).